A 1123-amino-acid chain; its full sequence is uncharacterized protein (1123 aa).

Disordered regions lie at residues 136 to 229 (LGES…PKLT), 262 to 471 (MLQY…LNQH), 483 to 514 (LSSI…SPNL), 527 to 609 (KKIN…QSDD), 629 to 769 (SILC…NNIS), 782 to 812 (LKPK…NSSS), 835 to 1005 (ITNN…GESN), and 1070 to 1099 (NNNN…NNNI). Over residues 166–185 (GGNGGNSGTNGDGDDGGCSL) the composition is skewed to gly residues. The segment covering 190 to 199 (DENDYEDGMV) has biased composition (acidic residues). Over residues 211–223 (SGDGGGGGGGGGD) the composition is skewed to gly residues. Low complexity predominate over residues 262–322 (MLQYQQQQQQ…TTTTHSNNSN (61 aa)). The span at 329–343 (PLNNSNSNIHFLTNQ) shows a compositional bias: polar residues. Composition is skewed to low complexity over residues 344 to 387 (QNSD…SNLN), 397 to 464 (STST…SSSS), 489 to 499 (NNKENNNNNNN), 527 to 548 (KKIN…NISS), and 563 to 585 (HQQQ…QQHQ). Polar residues predominate over residues 590 to 604 (SKSSSELQVPSSNYH). A compositionally biased stretch (basic and acidic residues) spans 632-646 (CKDDSKTNTNKDKDN). Low complexity-rich tracts occupy residues 647 to 707 (NNSN…INNN) and 727 to 769 (SVSS…NNIS). The span at 790–799 (SSPSIPTTSP) shows a compositional bias: polar residues. 2 stretches are compositionally biased toward low complexity: residues 835-984 (ITNN…NNNI) and 1070-1098 (NNNN…NNNN).

This is an uncharacterized protein from Dictyostelium discoideum (Social amoeba).